A 1858-amino-acid polypeptide reads, in one-letter code: Inactive histone-lysine N-methyltransferase 2E (1858 aa).

The HCFC1-binding motif (HBM) motif lies at 63–66 (DHNY). A PHD-type zinc finger spans residues 118 to 166 (VTRCICGFTHDDGYMICCDKCSVWQHIDCMGIDRQHIPDTYLCERCQPR). Zn(2+) contacts are provided by Cys-121, Cys-123, Cys-135, Cys-138, His-143, Cys-146, Cys-160, and Cys-163. Positions 217–269 (ASRVSKVNDKRRKKSGEKEQHISKCKKAFREGSRKSSRVKGSAPEIDPSSDGS) are disordered. Positions 232-250 (GEKEQHISKCKKAFREGSR) are enriched in basic and acidic residues. Residues 330–447 (PPVESHIQKN…KGTEITIAFD (118 aa)) enclose the SET domain. The O-linked (GlcNAc) serine glycan is linked to Ser-435. Thr-440 carries an O-linked (GlcNAc) threonine glycan. Residues 475 to 530 (SESMENINSGYETRRKKGKKDKDISKEKDTQNQNITLDCEGTTNKMKSPETKQRKL) are disordered. Residues 494 to 504 (KDKDISKEKDT) show a composition bias toward basic and acidic residues. Polar residues predominate over residues 505–520 (QNQNITLDCEGTTNKM). A coiled-coil region spans residues 559–615 (VEMESEEQIAERKRKMTREERKMEAILQAFARLEKREKRREQALERISTAKTEVKTE). Position 623 is a phosphoserine (Ser-623). The interval 630–687 (EQAKEENASKPTPAKVNRTKQRKSFSRSRTHIGQQRRRHRTVSMCSDIQPSSPDIEVT) is disordered. Residues 646-670 (NRTKQRKSFSRSRTHIGQQRRRHRT) are compositionally biased toward basic residues. Over residues 672–687 (SMCSDIQPSSPDIEVT) the composition is skewed to polar residues. 2 positions are modified to phosphoserine: Ser-837 and Ser-845. 2 stretches are compositionally biased toward low complexity: residues 887–901 (TSTP…PTHT) and 933–957 (PVTP…PESS). 2 disordered regions span residues 887 to 960 (TSTP…SPEI) and 1039 to 1068 (LETP…SSWV). The span at 1039–1048 (LETPAHDRAE) shows a compositional bias: basic and acidic residues. Residues 1049–1068 (PNSQLDSTHSGRGTMYSSWV) are compositionally biased toward polar residues. A Phosphoserine modification is found at Ser-1070. Disordered regions lie at residues 1164–1561 (KRQR…QNQQ) and 1581–1835 (VFTS…PVPG). Polar residues-rich tracts occupy residues 1186-1206 (PHAS…NDNG) and 1222-1235 (TVYN…SNNC). At Ser-1273 the chain carries Phosphoserine. Residues 1273-1282 (SDHRKDKDSG) are compositionally biased toward basic and acidic residues. 2 stretches are compositionally biased toward low complexity: residues 1285-1303 (SPCV…SSHS) and 1349-1362 (KSPP…SPGS). Ser-1359 bears the Phosphoserine mark. Polar residues-rich tracts occupy residues 1400–1432 (QQKQ…SQKL) and 1506–1542 (LPAN…LNST). The segment covering 1543-1553 (APPPPPPPPPS) has biased composition (pro residues). A compositionally biased stretch (polar residues) spans 1581-1599 (VFTSGPNQALPGTTSQQTV). The span at 1626-1637 (VPPPPPPPPAPG) shows a compositional bias: pro residues. The segment covering 1642–1651 (QQPNSHQQHS) has biased composition (polar residues). Positions 1677-1687 (LPPPPPPPGPA) are enriched in pro residues. A compositionally biased stretch (polar residues) spans 1698–1711 (TGLQGLQAQHQHVV). Positions 1714-1724 (APPPPPPPPPS) are enriched in pro residues. Residues 1798–1808 (QGPNSIPTPTA) are compositionally biased toward polar residues.

Belongs to the class V-like SAM-binding methyltransferase superfamily. Histone-lysine methyltransferase family. TRX/MLL subfamily. Component of a complex composed of KMT2E (isoform 3), OGT and USP7; the complex stabilizes KMT2E, preventing KMT2E ubiquitination and proteasomal-mediated degradation. Isoform 3 interacts (via N-terminus) with OGT (via TRP repeats). Isoform 3 interacts with deubiquitinating enzyme USP7 (via MATH domain). Isoform 3 interacts (via HBM motif) with HCFC1 (via Kelch domain). Isoform 3 interacts with E2F1; the interaction is probably indirect and is mediated via HCFC1. Ubiquitinated. Deubiquitinated by USP7. In terms of processing, O-glycosylated at Ser-435 and Thr-440 in the SET domain by OGT which probably prevents KMT2E proteasomal-mediated degradation. As to expression, widely expressed in both adult and fetal tissues. Highest levels of expression observed in fetal thymus and kidney and in adult hematopoietic tissues, jejunum and cerebellum. Isoform NKp44L: Not detected on circulating cells from healthy individuals, but is expressed on a large panel of tumor and transformed cells.

It is found in the chromosome. It localises to the cytoplasm. Its subcellular location is the cytoskeleton. The protein localises to the microtubule organizing center. The protein resides in the centrosome. It is found in the nucleus speckle. It localises to the nucleus. Its subcellular location is the nucleoplasm. The protein localises to the cell membrane. Its function is as follows. Associates with chromatin regions downstream of transcriptional start sites of active genes and thus regulates gene transcription. Chromatin interaction is mediated via the binding to tri-methylated histone H3 at 'Lys-4' (H3K4me3). Key regulator of hematopoiesis involved in terminal myeloid differentiation and in the regulation of hematopoietic stem cell (HSCs) self-renewal by a mechanism that involves DNA methylation. Also acts as an important cell cycle regulator, participating in cell cycle regulatory network machinery at multiple cell cycle stages including G1/S transition, S phase progression and mitotic entry. Recruited to E2F1 responsive promoters by HCFC1 where it stimulates tri-methylation of histone H3 at 'Lys-4' and transcriptional activation and thereby facilitates G1 to S phase transition. During myoblast differentiation, required to suppress inappropriate expression of S-phase-promoting genes and maintain expression of determination genes in quiescent cells. In terms of biological role, cellular ligand for NCR2/NKp44, may play a role as a danger signal in cytotoxicity and NK-cell-mediated innate immunity. This Homo sapiens (Human) protein is Inactive histone-lysine N-methyltransferase 2E (KMT2E).